The following is a 397-amino-acid chain: Decapping and exoribonuclease protein (397 aa).

The span at 1 to 20 shows a compositional bias: basic and acidic residues; that stretch reads MESRGTKREAGKIEVAEPRN. The segment at 1–37 is disordered; that stretch reads MESRGTKREAGKIEVAEPRNKLPRPAPSLPTDPALYS. A substrate-binding site is contributed by Arg-58. The segment at 67 to 88 is disordered; that stretch reads LRYYSPPPTNGQSPNFDLRDGY. Residues Glu-101 and 131 to 133 each bind substrate; that span reads WRG. Glu-192 contacts Mg(2+). Substrate contacts are provided by Cys-217 and Glu-234. The Mg(2+) site is built by Glu-234, Asp-236, Glu-253, and Leu-254. The substrate site is built by Lys-255 and Gln-280. Thr-392 bears the Phosphothreonine mark. At Ser-394 the chain carries Phosphoserine.

Belongs to the DXO/Dom3Z family. Mg(2+) is required as a cofactor.

It localises to the nucleus. It carries out the reaction a 5'-end triphospho-ribonucleoside in mRNA + H2O = a 5'-end phospho-ribonucleoside in mRNA + diphosphate + H(+). The catalysed reaction is a 5'-end NAD(+)-phospho-ribonucleoside in mRNA + H2O = a 5'-end phospho-ribonucleoside in mRNA + NAD(+) + H(+). The enzyme catalyses a 5'-end NAD(+)-phospho-ribonucleoside in snoRNA + H2O = a 5'-end phospho-ribonucleoside in snoRNA + NAD(+) + H(+). It catalyses the reaction a 5'-end (N(7)-methyl 5'-triphosphoguanosine)-ribonucleoside-ribonucleotide in mRNA + H2O = a (N(7)-methyl 5'-triphosphoguanosine)-nucleoside + a 5'-end phospho-ribonucleoside in mRNA + H(+). It carries out the reaction a 5'-end FAD-phospho-ribonucleoside in mRNA + H2O = a 5'-end phospho-ribonucleoside in mRNA + FAD + H(+). The catalysed reaction is a 5'-end CoA-ribonucleoside in mRNA + H2O = 3'-dephospho-CoA + a 5'-end phospho-ribonucleoside in mRNA + H(+). Decapping enzyme for NAD-capped RNAs: specifically hydrolyzes the nicotinamide adenine dinucleotide (NAD) cap from a subset of RNAs by removing the entire NAD moiety from the 5'-end of an NAD-capped RNA. The NAD-cap is present at the 5'-end of some RNAs and snoRNAs. In contrast to the canonical 5'-end N7 methylguanosine (m7G) cap, the NAD cap promotes mRNA decay. Preferentially acts on NAD-capped transcripts in response to environmental stress. Also acts as a non-canonical decapping enzyme that removes the entire cap structure of m7G capped or incompletely capped RNAs and mediates their subsequent degradation. Specifically degrades pre-mRNAs with a defective 5'-end m7G cap and is part of a pre-mRNA capping quality control. Has decapping activity toward incomplete 5'-end m7G cap mRNAs such as unmethylated 5'-end-capped RNA (cap0), while it has no activity toward 2'-O-ribose methylated m7G cap (cap1). In contrast to canonical decapping enzymes DCP2 and NUDT16, which cleave the cap within the triphosphate linkage, the decapping activity releases the entire cap structure GpppN and a 5'-end monophosphate RNA. Also has 5'-3' exoribonuclease activities: The 5'-end monophosphate RNA is then degraded by the 5'-3' exoribonuclease activity, enabling this enzyme to decap and degrade incompletely capped mRNAs. Also possesses RNA 5'-pyrophosphohydrolase activity by hydrolyzing the 5'-end triphosphate to release pyrophosphates. Exhibits decapping activity towards FAD-capped RNAs. Exhibits decapping activity towards dpCoA-capped RNAs in vitro. In Bos taurus (Bovine), this protein is Decapping and exoribonuclease protein.